The chain runs to 134 residues: MPYWLPTYNFEGLQCLQCKKALGSLDALKCKNHKYRRVHRGGKPYGMCQICLEALLQLERQEFPWTLLLPKDFVKVLGRLPGDYCVRCYYCGCVLSDSEKDRHALDHEGYLYVRGRARGRCYSCSSDGRRPCVF.

2 zinc fingers span residues Cys15–Cys51 and Cys88–Cys124.

The protein belongs to the papillomaviridae E6 protein family. Forms homodimers. Interacts with ubiquitin-protein ligase UBE3A/E6-AP; this interaction stimulates UBE3A ubiquitin activity. Interacts with host BAK1.

It localises to the host cytoplasm. It is found in the host nucleus. Functionally, plays a major role in the induction and maintenance of cellular transformation. E6 associates with host UBE3A/E6-AP ubiquitin-protein ligase and modulates its activity. Protects host keratinocytes from apoptosis by mediating the degradation of host BAK1. May also inhibit host immune response. The protein is Protein E6 of Bos taurus (Bovine).